Here is a 320-residue protein sequence, read N- to C-terminus: Acetyl-coenzyme A carboxylase carboxyl transferase subunit alpha (320 aa).

The 262-residue stretch at 33 to 294 (AFDGEIESLR…GDAVEEELKA (262 aa)) folds into the CoA carboxyltransferase C-terminal domain.

It belongs to the AccA family. In terms of assembly, acetyl-CoA carboxylase is a heterohexamer composed of biotin carboxyl carrier protein (AccB), biotin carboxylase (AccC) and two subunits each of ACCase subunit alpha (AccA) and ACCase subunit beta (AccD).

It is found in the cytoplasm. It catalyses the reaction N(6)-carboxybiotinyl-L-lysyl-[protein] + acetyl-CoA = N(6)-biotinyl-L-lysyl-[protein] + malonyl-CoA. Its pathway is lipid metabolism; malonyl-CoA biosynthesis; malonyl-CoA from acetyl-CoA: step 1/1. Functionally, component of the acetyl coenzyme A carboxylase (ACC) complex. First, biotin carboxylase catalyzes the carboxylation of biotin on its carrier protein (BCCP) and then the CO(2) group is transferred by the carboxyltransferase to acetyl-CoA to form malonyl-CoA. The chain is Acetyl-coenzyme A carboxylase carboxyl transferase subunit alpha from Phenylobacterium zucineum (strain HLK1).